The following is a 143-amino-acid chain: Large ribosomal subunit protein uL15 (143 aa).

Residues 20–52 are disordered; sequence GRGIGSGKGKTAGRGHKGQHSRAGGYHKVGFEG. Basic residues predominate over residues 30-39; the sequence is TAGRGHKGQH.

It belongs to the universal ribosomal protein uL15 family. In terms of assembly, part of the 50S ribosomal subunit.

Binds to the 23S rRNA. The chain is Large ribosomal subunit protein uL15 from Coxiella burnetii (strain CbuK_Q154) (Coxiella burnetii (strain Q154)).